Reading from the N-terminus, the 284-residue chain is Probable ADP-ribose 1''-phosphate phosphatase YML087W (284 aa).

Substrate contacts are provided by Asp23, Gln55, Asn80, and Asp90. Positions 34 to 230 (ESIPHAYIQN…HISKELKNVL (197 aa)) constitute a Macro domain. Catalysis depends on residues Asn80 and Asp90. Cys128 and Cys136 are oxidised to a cystine. Residue His145 is part of the active site. Residues Thr148 and Thr195 each coordinate substrate.

As to quaternary structure, homodimer.

It catalyses the reaction ADP-alpha-D-ribose 1''-phosphate + H2O = ADP-D-ribose + phosphate. Functionally, highly specific phosphatase involved in the metabolism of ADP-ribose 1''-phosphate (Appr1p) which is produced as a consequence of tRNA splicing. + phosphate. This chain is Probable ADP-ribose 1''-phosphate phosphatase YML087W, found in Saccharomyces cerevisiae (strain ATCC 204508 / S288c) (Baker's yeast).